Reading from the N-terminus, the 798-residue chain is Heterogeneous nuclear ribonucleoprotein U (798 aa).

Position 2 is an N-acetylserine (serine 2). At serine 4 the chain carries Phosphoserine. The SAP domain occupies 8 to 42 (VKKLKVSELKEELKKRRLSDKGLKADLMDRLQAAL). N6-acetyllysine occurs at positions 17 and 21. Residues 41–229 (ALDNEAGGRP…VKRPREDHGR (189 aa)) form a disordered region. Serine 58 is modified (phosphoserine). Composition is skewed to low complexity over residues 71-80 (AGLEQEAAAG) and 103-113 (ENGAAGAADAG). Acidic residues-rich tracts occupy residues 114–128 (AMEEEEAASEDENGD) and 134–147 (EGEDELGDEEEGAG). A compositionally biased stretch (low complexity) spans 153 to 169 (GEQQSQPPAAAQQASQQ). Lysine 179 carries the post-translational modification N6-acetyllysine. At serine 180 the chain carries ADP-ribosylserine. A compositionally biased stretch (low complexity) spans 192-203 (APPGARQGQQQA). The segment covering 207 to 229 (GKTEQKAGDKKRGVKRPREDHGR) has biased composition (basic and acidic residues). Arginine 229 is subject to Citrulline. Lysine 239 is subject to N6-acetyllysine; alternate. A Glycyl lysine isopeptide (Lys-Gly) (interchain with G-Cter in SUMO1); alternate cross-link involves residue lysine 239. Lysine 239 participates in a covalent cross-link: Glycyl lysine isopeptide (Lys-Gly) (interchain with G-Cter in SUMO2); alternate. Tyrosine 240 bears the Phosphotyrosine mark. 2 positions are modified to phosphoserine: serine 241 and serine 245. The region spanning 242–438 (RAKSPQPPVE…VEFNFGQKEK (197 aa)) is the B30.2/SPRY domain. Threonine 260 carries the phosphothreonine modification. N6-acetyllysine is present on lysine 326. Residues 462 to 646 (PKGPEEKKDC…QKLLEQYKEE (185 aa)) form an ATPase domain region. A Glycyl lysine isopeptide (Lys-Gly) (interchain with G-Cter in SUMO2) cross-link involves residue lysine 469. 478–485 (GLPGAGKT) serves as a coordination point for ATP. An N6-acetyllysine; alternate mark is found at lysine 490 and lysine 498. Glycyl lysine isopeptide (Lys-Gly) (interchain with G-Cter in SUMO2); alternate cross-links involve residues lysine 490 and lysine 498. A Phosphothreonine modification is found at threonine 506. Lysine 510 participates in a covalent cross-link: Glycyl lysine isopeptide (Lys-Gly) (interchain with G-Cter in SUMO2). Lysine 525 is modified (N6-acetyllysine). At lysine 539 the chain carries N6-acetyllysine; alternate. Lysine 539 is covalently cross-linked (Glycyl lysine isopeptide (Lys-Gly) (interchain with G-Cter in SUMO2); alternate). Residue lysine 548 forms a Glycyl lysine isopeptide (Lys-Gly) (interchain with G-Cter in SUMO2) linkage. Threonine 556 is modified (phosphothreonine). Residues lysine 583 and lysine 600 each participate in a glycyl lysine isopeptide (Lys-Gly) (interchain with G-Cter in SUMO2) cross-link. The interval 585 to 600 (EDYKQRTQKKAEVEGK) is actin-binding. An N6-acetyllysine; alternate modification is found at lysine 609. Residue lysine 609 forms a Glycyl lysine isopeptide (Lys-Gly) (interchain with G-Cter in SUMO2); alternate linkage. The stretch at 624-651 (DEITYVELQKEEAQKLLEQYKEESKKAL) forms a coiled coil. Residues lysine 638 and lysine 644 each participate in a glycyl lysine isopeptide (Lys-Gly) (interchain with G-Cter in SUMO2) cross-link. The segment covering 645 to 657 (EESKKALPPEKKQ) has biased composition (basic and acidic residues). Positions 645–727 (EESKKALPPE…GSGGIGYPYP (83 aa)) are disordered. The residue at position 676 (arginine 676) is an Omega-N-methylarginine. Over residues 684–702 (GGFNMRGGNFRGGAPGNRG) the composition is skewed to gly residues. Residues 688–713 (MRGGNFRGGAPGNRGGYNRRGNMPQR) form an RNA-binding RGG-box region. Arginine 689, arginine 694, and arginine 701 each carry asymmetric dimethylarginine. 2 positions are modified to asymmetric dimethylarginine; alternate: arginine 707 and arginine 713. Residues arginine 707 and arginine 713 each carry the omega-N-methylarginine; alternate modification. Residues 713 to 723 (RGGGGGSGGIG) show a composition bias toward gly residues. An asymmetric dimethylarginine mark is found at arginine 728 and arginine 735. A disordered region spans residues 743–772 (NYNRGGMPNRGNYNQNFRGRGNNRGYKNQS). Lysine 787 carries the N6-acetyllysine; alternate modification. Lysine 787 is covalently cross-linked (Glycyl lysine isopeptide (Lys-Gly) (interchain with G-Cter in SUMO2); alternate).

In terms of assembly, oligomer (via ATPase domain and RNA-binding RGG-box region); oligomerization occurs upon ATP-binding in a chromatin-associated RNAs (caRNAs)- and transcription-dependent manner and is required for chromatin decompaction. ATP hydrolysis is required to cycle from an oligomeric to monomeric state to compact chromatin. Component of the coding region determinant (CRD)-mediated complex, composed of DHX9, HNRNPU, IGF2BP1, SYNCRIP and YBX1. Identified in the spliceosome C complex. Identified in a IGF2BP1-dependent mRNP granule complex containing untranslated mRNAs. Associates with heterogeneous nuclear ribonucleoprotein (hnRNP) particles. Associates (via middle region) with the C-terminal domain (CTD) RNA polymerase II (Pol II) holoenzyme; this association occurs in a RNA-independent manner. Associates (via middle region) with the core-TFIIH basal transcription factor complex; this association inhibits the CTD phosphorylation of RNA polymerase II holoenzyme by down-regulating TFIIH kinase activity. Associates with the telomerase holoenzyme complex. Associates with spindle microtubules (MTs) in a TPX2-dependent manner. Interacts (via C-terminus) with actin; this interaction is direct and mediates association with the phosphorylated CTD of RNA polymerase II and is disrupted in presence of the long non-coding H19 RNA. Interacts with AURKA. Interacts (via C-terminus) with CBX5; this interaction is, at least in part, RNA-dependent. Interacts with CR2. Interacts with CRY1. Interacts (via C-terminus) with EP300; this interaction enhances DNA-binding to nuclear scaffold/matrix attachment region (S/MAR) elements. Interacts with ERBB4. Interacts with GEMIN5. Interacts with IGF2BP1. Interacts with IGF2BP2 and IGF2BP3. Interacts with NCL; this interaction occurs during mitosis. Interacts (via C-terminus) with NR3C1 (via C-terminus). Interacts with PLK1; this interaction induces phosphorylation of HNRNPU at Ser-58 in mitosis. Interacts with POU3F4. Interacts with SMARCA4; this interaction occurs in embryonic stem cells and stimulates global Pol II-mediated transcription. Interacts (via C-terminus) with TOP2A; this interaction protects the topoisomerase TOP2A from degradation and positively regulates the relaxation of supercoiled DNA by TOP2A in a RNA-dependent manner. Interacts with TPX2; this interaction recruits HNRNPU to spindle microtubules (MTs). Interacts with UBQLN2. Interacts (via RNA-binding RGG-box region) with ZBTB7B; the interaction facilitates the recruitment of long non-coding RNA Blnc1 by ZBTB7B. Interacts with ERCC6. Post-translationally, cleaved at Asp-94 by CASP3 during T-cell apoptosis, resulting in a loss of DNA- and chromatin-binding activities. Extensively phosphorylated. Phosphorylated on Ser-58 by PLK1 and dephosphorylated by protein phosphatase 2A (PP2A) in mitosis. In terms of processing, arg-707 and Arg-713 are dimethylated, probably to asymmetric dimethylarginine. Post-translationally, citrullinated by PADI4.

The protein localises to the nucleus. It is found in the nucleus matrix. The protein resides in the chromosome. Its subcellular location is the nucleus speckle. It localises to the cytoplasm. The protein localises to the cytoskeleton. It is found in the microtubule organizing center. The protein resides in the centrosome. Its subcellular location is the centromere. It localises to the kinetochore. The protein localises to the spindle. It is found in the spindle pole. The protein resides in the midbody. Its subcellular location is the cell surface. It localises to the cytoplasmic granule. Functionally, DNA- and RNA-binding protein involved in several cellular processes such as nuclear chromatin organization, telomere-length regulation, transcription, mRNA alternative splicing and stability, Xist-mediated transcriptional silencing and mitotic cell progression. Plays a role in the regulation of interphase large-scale gene-rich chromatin organization through chromatin-associated RNAs (caRNAs) in a transcription-dependent manner, and thereby maintains genomic stability. Required for the localization of the long non-coding Xist RNA on the inactive chromosome X (Xi) and the subsequent initiation and maintenance of X-linked transcriptional gene silencing during X-inactivation. Required for the topoisomerase TOP2A protein stability and activity in a RNA-dependent manner. Plays a role as a RNA polymerase II (Pol II) holoenzyme transcription regulator. Promotes transcription initiation by direct association with the core-TFIIH basal transcription factor complex for the assembly of a functional pre-initiation complex with Pol II in a actin-dependent manner. Blocks Pol II transcription elongation activity by inhibiting the C-terminal domain (CTD) phosphorylation of Pol II and dissociates from Pol II pre-initiation complex prior to productive transcription elongation. Positively regulates CBX5-induced transcriptional gene silencing and retention of CBX5 in the nucleus. Negatively regulates glucocorticoid-mediated transcriptional activation. Key regulator of transcription initiation and elongation in embryonic stem cells upon leukemia inhibitory factor (LIF) signaling. Involved in the long non-coding RNA H19-mediated Pol II transcriptional repression. Participates in the circadian regulation of the core clock component BMAL1 transcription. Plays a role in the regulation of telomere length. Plays a role as a global pre-mRNA alternative splicing modulator by regulating U2 small nuclear ribonucleoprotein (snRNP) biogenesis. Plays a role in mRNA stability. Component of the CRD-mediated complex that promotes MYC mRNA stabilization. Enhances the expression of specific genes, such as tumor necrosis factor TNFA, by regulating mRNA stability, possibly through binding to the 3'-untranslated region (UTR). Plays a role in mitotic cell cycle regulation. Involved in the formation of stable mitotic spindle microtubules (MTs) attachment to kinetochore, spindle organization and chromosome congression. Phosphorylation at Ser-58 by PLK1 is required for chromosome alignement and segregation and progression through mitosis. Also contributes to the targeting of AURKA to mitotic spindle MTs. Binds to double- and single-stranded DNA and RNA, poly(A), poly(C) and poly(G) oligoribonucleotides. Binds to chromatin-associated RNAs (caRNAs). Associates with chromatin to scaffold/matrix attachment region (S/MAR) elements in DNA. Associates with chromatin in a chromatin-associated RNAs (caRNAs)-dependent manner. Binds to the Xist RNA. Binds the long non-coding H19 RNA. Binds to SMN1/2 pre-mRNAs at G/U-rich regions. Binds to small nuclear RNAs (snRNAs). Binds to the 3'-UTR of TNFA mRNA. Binds (via RNA-binding RGG-box region) to the long non-coding Xist RNA; this binding is direct and bridges the Xist RNA and the inactive chromosome X (Xi). Also negatively regulates embryonic stem cell differentiation upon LIF signaling. Required for embryonic development. Binds to brown fat long non-coding RNA 1 (Blnc1); facilitates the recruitment of Blnc1 by ZBTB7B required to drive brown and beige fat development and thermogenesis. The chain is Heterogeneous nuclear ribonucleoprotein U from Rattus norvegicus (Rat).